Here is a 251-residue protein sequence, read N- to C-terminus: Triosephosphate isomerase (251 aa).

9 to 11 is a binding site for substrate; sequence NWK. The active-site Electrophile is the H95. Catalysis depends on E167, which acts as the Proton acceptor. Substrate is bound by residues G173, S212, and 233–234; that span reads GG.

Belongs to the triosephosphate isomerase family. As to quaternary structure, homodimer.

Its subcellular location is the cytoplasm. The enzyme catalyses D-glyceraldehyde 3-phosphate = dihydroxyacetone phosphate. The protein operates within carbohydrate biosynthesis; gluconeogenesis. Its pathway is carbohydrate degradation; glycolysis; D-glyceraldehyde 3-phosphate from glycerone phosphate: step 1/1. Involved in the gluconeogenesis. Catalyzes stereospecifically the conversion of dihydroxyacetone phosphate (DHAP) to D-glyceraldehyde-3-phosphate (G3P). The polypeptide is Triosephosphate isomerase (Pseudomonas aeruginosa (strain LESB58)).